Here is a 243-residue protein sequence, read N- to C-terminus: DNA repair protein RecO (243 aa).

The protein belongs to the RecO family.

Involved in DNA repair and RecF pathway recombination. This is DNA repair protein RecO from Phenylobacterium zucineum (strain HLK1).